The chain runs to 109 residues: Putative antitoxin HigA3 (109 aa).

The region spanning 41 to 97 (LAEIRKALGHARQADVAALMGVSQARVSKLESGDLSHTELGTLQAYVAALGGHLRIV) is the HTH cro/C1-type domain. The segment at residues 53–72 (QADVAALMGVSQARVSKLES) is a DNA-binding region (H-T-H motif).

In terms of biological role, putative antitoxin component of a type II toxin-antitoxin (TA) system. Its cognate toxin would be HigB3. This Mycobacterium tuberculosis (strain ATCC 25618 / H37Rv) protein is Putative antitoxin HigA3.